The following is a 603-amino-acid chain: HAUS augmin-like complex subunit 3 (603 aa).

Residue serine 2 is modified to N-acetylserine. 4 coiled-coil regions span residues 93 to 177 (RLDD…TQLM), 305 to 336 (VDKENLDAKISSLTSEIMKLEKEVTQIKDRSL), 389 to 426 (LSYEIELRKHRDIYRQLENLVQELSQSNMMLYKQLEML), and 458 to 495 (ENKKKELFLTHGNLEEVAEKLKQNISLVQDQLAVSAQE).

This sequence belongs to the HAUS3 family. In terms of assembly, component of the HAUS augmin-like complex. The complex interacts with the gamma-tubulin ring complex and this interaction is required for spindle assembly. Interacts with EML3 (phosphorylated at 'Thr-881').

Its subcellular location is the cytoplasm. It is found in the cytoskeleton. The protein resides in the microtubule organizing center. The protein localises to the centrosome. It localises to the spindle. In terms of biological role, contributes to mitotic spindle assembly, maintenance of centrosome integrity and completion of cytokinesis as part of the HAUS augmin-like complex. In Homo sapiens (Human), this protein is HAUS augmin-like complex subunit 3 (HAUS3).